The following is a 199-amino-acid chain: Phycocyanobilin lyase CpcT (199 aa).

Belongs to the CpcT/CpeT biliprotein lyase family.

Functionally, catalyzes the site-selective attachment of phycocyanobilin (PCB) to 'Cys-154' of C-phycocyanin subunit beta (CpcB) and to 'Cys-153' of phycoerythrocyanin subunit beta (PecB). Does not have chromophore lyase activity for ApcA1, ApcA2, ApcB, ApcD, ApcF or PecA. This is Phycocyanobilin lyase CpcT (cpcT1) from Nostoc sp. (strain PCC 7120 / SAG 25.82 / UTEX 2576).